A 1221-amino-acid polypeptide reads, in one-letter code: Putative DNA-directed RNA polymerase II subunit RPB2 homolog (1221 aa).

Composition is skewed to low complexity over residues 1–54 (MSRG…SASS) and 692–701 (PAPSSSPSDS). 2 disordered regions span residues 1–63 (MSRG…PMSE) and 673–701 (RGSG…PSDS). Asp823 serves as a coordination point for Mg(2+). Residues Cys1174, Cys1177, Cys1187, and Cys1190 each contribute to the Zn(2+) site. A C4-type zinc finger spans residues 1174-1190 (CKECGRISDHFEYCRMC).

The protein belongs to the RNA polymerase beta chain family.

The catalysed reaction is RNA(n) + a ribonucleoside 5'-triphosphate = RNA(n+1) + diphosphate. Its function is as follows. Component of the DNA-dependent RNA polymerase that catalyzes the transcription of DNA into RNA using the four ribonucleoside triphosphates as substrates. Second largest component of RNA polymerase II which synthesizes mRNA precursors and many functional non-coding RNAs. Proposed to contribute to the polymerase catalytic activity and forms the polymerase active center together with the largest subunit. The sequence is that of Putative DNA-directed RNA polymerase II subunit RPB2 homolog from Dryophytes versicolor (chameleon treefrog).